The following is a 297-amino-acid chain: Urease accessory protein UreD (297 aa).

It belongs to the UreD family. In terms of assembly, ureD, UreF and UreG form a complex that acts as a GTP-hydrolysis-dependent molecular chaperone, activating the urease apoprotein by helping to assemble the nickel containing metallocenter of UreC. The UreE protein probably delivers the nickel.

Its subcellular location is the cytoplasm. In terms of biological role, required for maturation of urease via the functional incorporation of the urease nickel metallocenter. The protein is Urease accessory protein UreD of Prochlorococcus marinus subsp. pastoris (strain CCMP1986 / NIES-2087 / MED4).